The sequence spans 101 residues: Large ribosomal subunit protein uL24 (101 aa).

It belongs to the universal ribosomal protein uL24 family. In terms of assembly, part of the 50S ribosomal subunit.

Its function is as follows. One of two assembly initiator proteins, it binds directly to the 5'-end of the 23S rRNA, where it nucleates assembly of the 50S subunit. One of the proteins that surrounds the polypeptide exit tunnel on the outside of the subunit. In Jannaschia sp. (strain CCS1), this protein is Large ribosomal subunit protein uL24.